The primary structure comprises 81 residues: Photosystem I iron-sulfur center (81 aa).

4Fe-4S ferredoxin-type domains are found at residues 2 to 31 (AHSV…MVPW) and 39 to 68 (IASA…VRVY). The [4Fe-4S] cluster site is built by cysteine 11, cysteine 14, cysteine 17, cysteine 21, cysteine 48, cysteine 51, cysteine 54, and cysteine 58.

The eukaryotic PSI reaction center is composed of at least 11 subunits. It depends on [4Fe-4S] cluster as a cofactor.

It localises to the plastid. Its subcellular location is the chloroplast thylakoid membrane. It catalyses the reaction reduced [plastocyanin] + hnu + oxidized [2Fe-2S]-[ferredoxin] = oxidized [plastocyanin] + reduced [2Fe-2S]-[ferredoxin]. Functionally, apoprotein for the two 4Fe-4S centers FA and FB of photosystem I (PSI); essential for photochemical activity. FB is the terminal electron acceptor of PSI, donating electrons to ferredoxin. The C-terminus interacts with PsaA/B/D and helps assemble the protein into the PSI complex. Required for binding of PsaD and PsaE to PSI. PSI is a plastocyanin/cytochrome c6-ferredoxin oxidoreductase, converting photonic excitation into a charge separation, which transfers an electron from the donor P700 chlorophyll pair to the spectroscopically characterized acceptors A0, A1, FX, FA and FB in turn. This is Photosystem I iron-sulfur center from Gracilaria tenuistipitata var. liui (Red alga).